A 186-amino-acid chain; its full sequence is Ribosome-recycling factor (186 aa).

The protein belongs to the RRF family.

The protein resides in the cytoplasm. Its function is as follows. Responsible for the release of ribosomes from messenger RNA at the termination of protein biosynthesis. May increase the efficiency of translation by recycling ribosomes from one round of translation to another. The sequence is that of Ribosome-recycling factor from Cupriavidus taiwanensis (strain DSM 17343 / BCRC 17206 / CCUG 44338 / CIP 107171 / LMG 19424 / R1) (Ralstonia taiwanensis (strain LMG 19424)).